Consider the following 262-residue polypeptide: ATP synthase subunit a (262 aa).

The next 5 membrane-spanning stretches (helical) occupy residues 25-45, 86-106, 130-150, 204-226, and 240-260; these read NVHI…LAVF, VAPL…IDLI, DISA…FYTV, LIFI…GIPL, and LQAF…YNKA.

Belongs to the ATPase A chain family. F-type ATPases have 2 components, CF(1) - the catalytic core - and CF(0) - the membrane proton channel. CF(1) has five subunits: alpha(3), beta(3), gamma(1), delta(1), epsilon(1). CF(0) has three main subunits: a(1), b(2) and c(9-12). The alpha and beta chains form an alternating ring which encloses part of the gamma chain. CF(1) is attached to CF(0) by a central stalk formed by the gamma and epsilon chains, while a peripheral stalk is formed by the delta and b chains.

It localises to the cell inner membrane. Key component of the proton channel; it plays a direct role in the translocation of protons across the membrane. The protein is ATP synthase subunit a of Mannheimia succiniciproducens (strain KCTC 0769BP / MBEL55E).